Here is a 597-residue protein sequence, read N- to C-terminus: ATP-dependent lipid A-core flippase (597 aa).

Transmembrane regions (helical) follow at residues L26 to V46, W76 to S96, A138 to V158, V164 to V184, Q263 to V283, and V292 to L312. One can recognise an ABC transmembrane type-1 domain in the interval I38–R321. An ABC transporter domain is found at V353–I590. G390–T397 is an ATP binding site.

Belongs to the ABC transporter superfamily. Lipid exporter (TC 3.A.1.106) family. As to quaternary structure, homodimer.

The protein resides in the cell inner membrane. It catalyses the reaction ATP + H2O + lipid A-core oligosaccharideSide 1 = ADP + phosphate + lipid A-core oligosaccharideSide 2.. Involved in lipopolysaccharide (LPS) biosynthesis. Translocates lipid A-core from the inner to the outer leaflet of the inner membrane. Transmembrane domains (TMD) form a pore in the inner membrane and the ATP-binding domain (NBD) is responsible for energy generation. This is ATP-dependent lipid A-core flippase from Paraburkholderia xenovorans (strain LB400).